The following is a 440-amino-acid chain: Tryptophan synthase beta chain (440 aa).

Lys-110 is modified (N6-(pyridoxal phosphate)lysine).

This sequence belongs to the TrpB family. In terms of assembly, tetramer of two alpha and two beta chains. Pyridoxal 5'-phosphate is required as a cofactor.

It catalyses the reaction (1S,2R)-1-C-(indol-3-yl)glycerol 3-phosphate + L-serine = D-glyceraldehyde 3-phosphate + L-tryptophan + H2O. Its pathway is amino-acid biosynthesis; L-tryptophan biosynthesis; L-tryptophan from chorismate: step 5/5. The beta subunit is responsible for the synthesis of L-tryptophan from indole and L-serine. This chain is Tryptophan synthase beta chain, found in Thermococcus gammatolerans (strain DSM 15229 / JCM 11827 / EJ3).